We begin with the raw amino-acid sequence, 129 residues long: Glycine cleavage system H protein (129 aa).

In terms of domain architecture, Lipoyl-binding spans 24–106 (LLKIGVSEFA…IGEGWLVILK (83 aa)). At Lys65 the chain carries N6-lipoyllysine.

This sequence belongs to the GcvH family. As to quaternary structure, the glycine cleavage system is composed of four proteins: P, T, L and H. It depends on (R)-lipoate as a cofactor.

Functionally, the glycine cleavage system catalyzes the degradation of glycine. The H protein shuttles the methylamine group of glycine from the P protein to the T protein. This chain is Glycine cleavage system H protein, found in Prochlorococcus marinus (strain MIT 9215).